The sequence spans 484 residues: Protein nucleotidyltransferase YdiU (484 aa).

8 residues coordinate ATP: glycine 87, glycine 89, arginine 90, lysine 110, aspartate 122, glycine 123, arginine 173, and arginine 180. Catalysis depends on aspartate 249, which acts as the Proton acceptor. Mg(2+)-binding residues include asparagine 250 and aspartate 259. Aspartate 259 is a binding site for ATP.

The protein belongs to the SELO family. Requires Mg(2+) as cofactor. It depends on Mn(2+) as a cofactor.

It catalyses the reaction L-seryl-[protein] + ATP = 3-O-(5'-adenylyl)-L-seryl-[protein] + diphosphate. The enzyme catalyses L-threonyl-[protein] + ATP = 3-O-(5'-adenylyl)-L-threonyl-[protein] + diphosphate. The catalysed reaction is L-tyrosyl-[protein] + ATP = O-(5'-adenylyl)-L-tyrosyl-[protein] + diphosphate. It carries out the reaction L-histidyl-[protein] + UTP = N(tele)-(5'-uridylyl)-L-histidyl-[protein] + diphosphate. It catalyses the reaction L-seryl-[protein] + UTP = O-(5'-uridylyl)-L-seryl-[protein] + diphosphate. The enzyme catalyses L-tyrosyl-[protein] + UTP = O-(5'-uridylyl)-L-tyrosyl-[protein] + diphosphate. In terms of biological role, nucleotidyltransferase involved in the post-translational modification of proteins. It can catalyze the addition of adenosine monophosphate (AMP) or uridine monophosphate (UMP) to a protein, resulting in modifications known as AMPylation and UMPylation. This chain is Protein nucleotidyltransferase YdiU, found in Lachnoclostridium phytofermentans (strain ATCC 700394 / DSM 18823 / ISDg) (Clostridium phytofermentans).